A 400-amino-acid chain; its full sequence is DNA primase large subunit PriL (400 aa).

The [4Fe-4S] cluster site is built by C247, C356, C367, and C373.

Belongs to the eukaryotic-type primase large subunit family. Heterodimer of a small subunit (PriS) and a large subunit (PriL). [4Fe-4S] cluster is required as a cofactor.

Regulatory subunit of DNA primase, an RNA polymerase that catalyzes the synthesis of short RNA molecules used as primers for DNA polymerase during DNA replication. Stabilizes and modulates the activity of the small subunit, increasing the rate of DNA synthesis, and conferring RNA synthesis capability. The DNA polymerase activity may enable DNA primase to also catalyze primer extension after primer synthesis. May also play a role in DNA repair. This Thermococcus kodakarensis (strain ATCC BAA-918 / JCM 12380 / KOD1) (Pyrococcus kodakaraensis (strain KOD1)) protein is DNA primase large subunit PriL.